Consider the following 165-residue polypeptide: uncharacterized protein (165 aa).

This sequence belongs to the IIV-6 196R family.

This is an uncharacterized protein from Invertebrate iridescent virus 3 (IIV-3).